A 296-amino-acid chain; its full sequence is Probable endonuclease 4 (296 aa).

Zn(2+) contacts are provided by H68, H109, E144, D178, H181, H213, D226, H228, and E258.

Belongs to the AP endonuclease 2 family. Requires Zn(2+) as cofactor.

It carries out the reaction Endonucleolytic cleavage to 5'-phosphooligonucleotide end-products.. Endonuclease IV plays a role in DNA repair. It cleaves phosphodiester bonds at apurinic or apyrimidinic (AP) sites, generating a 3'-hydroxyl group and a 5'-terminal sugar phosphate. The chain is Probable endonuclease 4 from Staphylococcus saprophyticus subsp. saprophyticus (strain ATCC 15305 / DSM 20229 / NCIMB 8711 / NCTC 7292 / S-41).